Reading from the N-terminus, the 359-residue chain is 4-hydroxy-3-methylbut-2-en-1-yl diphosphate synthase (flavodoxin) (359 aa).

4 residues coordinate [4Fe-4S] cluster: cysteine 263, cysteine 266, cysteine 298, and glutamate 305.

Belongs to the IspG family. [4Fe-4S] cluster serves as cofactor.

It catalyses the reaction (2E)-4-hydroxy-3-methylbut-2-enyl diphosphate + oxidized [flavodoxin] + H2O + 2 H(+) = 2-C-methyl-D-erythritol 2,4-cyclic diphosphate + reduced [flavodoxin]. The protein operates within isoprenoid biosynthesis; isopentenyl diphosphate biosynthesis via DXP pathway; isopentenyl diphosphate from 1-deoxy-D-xylulose 5-phosphate: step 5/6. In terms of biological role, converts 2C-methyl-D-erythritol 2,4-cyclodiphosphate (ME-2,4cPP) into 1-hydroxy-2-methyl-2-(E)-butenyl 4-diphosphate. The protein is 4-hydroxy-3-methylbut-2-en-1-yl diphosphate synthase (flavodoxin) of Wolinella succinogenes (strain ATCC 29543 / DSM 1740 / CCUG 13145 / JCM 31913 / LMG 7466 / NCTC 11488 / FDC 602W) (Vibrio succinogenes).